The sequence spans 333 residues: Sphingomyelinase C (333 aa).

The N-terminal stretch at 1-27 (MKGKLLKGVLSLGVGLGALYSGTSAQA) is a signal peptide. Cysteine 150 and cysteine 186 are oxidised to a cystine.

This sequence belongs to the neutral sphingomyelinase family. The cofactor is Mg(2+).

The protein localises to the secreted. It catalyses the reaction a sphingomyelin + H2O = phosphocholine + an N-acylsphing-4-enine + H(+). Its activity is regulated as follows. Activated by cobalt and manganese ions. Functionally, required, with sphingomyelinase, to effect target cell lysis (hemolysis). The polypeptide is Sphingomyelinase C (sph) (Bacillus cereus).